The sequence spans 160 residues: MNIIGIDPSLNSTGWAILSVHDNNYNEIRLVDNGSILTSNKKTIGERLNKIYSELLNILNSYKVDTASMEEIFINKNPKSSTLLCYARGVLLLTLNVACIPLFEYSANRVKKSITGNGHAKKEQVCFMIENILNIKCHGTYDISDAIAVAICHIYSIKAF.

Catalysis depends on residues aspartate 7, glutamate 70, and aspartate 142. Mg(2+) contacts are provided by aspartate 7, glutamate 70, and aspartate 142.

The protein belongs to the RuvC family. Homodimer which binds Holliday junction (HJ) DNA. The HJ becomes 2-fold symmetrical on binding to RuvC with unstacked arms; it has a different conformation from HJ DNA in complex with RuvA. In the full resolvosome a probable DNA-RuvA(4)-RuvB(12)-RuvC(2) complex forms which resolves the HJ. The cofactor is Mg(2+).

The protein resides in the cytoplasm. The enzyme catalyses Endonucleolytic cleavage at a junction such as a reciprocal single-stranded crossover between two homologous DNA duplexes (Holliday junction).. In terms of biological role, the RuvA-RuvB-RuvC complex processes Holliday junction (HJ) DNA during genetic recombination and DNA repair. Endonuclease that resolves HJ intermediates. Cleaves cruciform DNA by making single-stranded nicks across the HJ at symmetrical positions within the homologous arms, yielding a 5'-phosphate and a 3'-hydroxyl group; requires a central core of homology in the junction. The consensus cleavage sequence is 5'-(A/T)TT(C/G)-3'. Cleavage occurs on the 3'-side of the TT dinucleotide at the point of strand exchange. HJ branch migration catalyzed by RuvA-RuvB allows RuvC to scan DNA until it finds its consensus sequence, where it cleaves and resolves the cruciform DNA. The protein is Crossover junction endodeoxyribonuclease RuvC of Ehrlichia ruminantium (strain Welgevonden).